Here is a 287-residue protein sequence, read N- to C-terminus: Ribosomal RNA small subunit methyltransferase A (287 aa).

S-adenosyl-L-methionine contacts are provided by Asn28, Leu30, Gly55, Glu77, Asp103, and Asn123.

Belongs to the class I-like SAM-binding methyltransferase superfamily. rRNA adenine N(6)-methyltransferase family. RsmA subfamily.

The protein localises to the cytoplasm. It catalyses the reaction adenosine(1518)/adenosine(1519) in 16S rRNA + 4 S-adenosyl-L-methionine = N(6)-dimethyladenosine(1518)/N(6)-dimethyladenosine(1519) in 16S rRNA + 4 S-adenosyl-L-homocysteine + 4 H(+). Its function is as follows. Specifically dimethylates two adjacent adenosines (A1518 and A1519) in the loop of a conserved hairpin near the 3'-end of 16S rRNA in the 30S particle. May play a critical role in biogenesis of 30S subunits. This Rhodopseudomonas palustris (strain HaA2) protein is Ribosomal RNA small subunit methyltransferase A.